The sequence spans 500 residues: Inner membrane transporter YjeM (500 aa).

Residues 1-7 (MPHTIKK) are Cytoplasmic-facing. The helical transmembrane segment at 8-28 (MSLIGLILMIFTSVFGFANSP) threads the bilayer. At 29 to 37 (SAYYLMGYS) the chain is on the periplasmic side. The helical transmembrane segment at 38–58 (AIPFYIFSALLFFIPFALMMA) threads the bilayer. The Cytoplasmic segment spans residues 59–82 (EMGAAYRKEEGGIYSWMNNSVGPR). The chain crosses the membrane as a helical span at residues 83-103 (FAFIGTFMWFSSYIIWMVSTS). At 104–132 (AKVWVPFSTFLYGSDMTQHWRIAGLEPTQ) the chain is on the periplasmic side. Residues 133–153 (VVGLLAVAWMILVTVVASKGI) form a helical membrane-spanning segment. The Cytoplasmic portion of the chain corresponds to 154-163 (NKIARITAVG). A helical membrane pass occupies residues 164 to 184 (GIAVMCLNLVLLLVSITILLL). Residues 185–209 (NGGHFAQDINFLASPNPGYQSGLAM) are Periplasmic-facing. A helical membrane pass occupies residues 210–230 (LSFVVFAIFAYGGIEAVGGLV). The Cytoplasmic portion of the chain corresponds to 231–243 (DKTENPEKNFAKG). Residues 244–264 (IVFAAIVISIGYSLAIFLWGV) form a helical membrane-spanning segment. Topologically, residues 265-319 (STNWQQVLSNGSVNLGNITYVLMKSLGMTLGNALHLSPEASLSLGVWFARITGLS) are periplasmic. The helical transmembrane segment at 320-340 (MFLAYTGAFFTLCYSPLKAII) threads the bilayer. Residues 341-369 (QGTPKALWPEPMTRLNAMGMPSIAMWMQC) lie on the Cytoplasmic side of the membrane. The chain crosses the membrane as a helical span at residues 370 to 390 (GLVTVFILLVSFGGGTASAFF). Residues 391–394 (NKLT) are Periplasmic-facing. Residues 395-415 (LMANVSMTLPYLFLALAFPFF) form a helical membrane-spanning segment. At 416–433 (KARQDLDRPFVIFKTHLS) the chain is on the cytoplasmic side. A helical transmembrane segment spans residues 434 to 454 (AMIATVVVVLVVTFANVFTII). Topologically, residues 455 to 462 (QPVVEAGD) are periplasmic. The chain crosses the membrane as a helical span at residues 463–483 (WDSTLWMIGGPVFFSLLAMAI). Over 484 to 500 (YQNYCSRVAKNPQWAVE) the chain is Cytoplasmic.

Belongs to the amino acid-polyamine-organocation (APC) superfamily.

It is found in the cell inner membrane. This chain is Inner membrane transporter YjeM (yjeM), found in Escherichia coli (strain K12).